A 530-amino-acid chain; its full sequence is MRLNDITRGTGLEEHGITNANLIYWTPPTAVLYEQIVKRGEGLVTHLGAVAVKTGHYTGRAANEKFIVDEPSSNDHIAWGKVNQPFDSAKFDALFGRMLAYLHGKDIFVQECFAGCSPDHRLPVRVITERAWHSLFARNMFVRATPEELVGFKPGFTVIDLPAFHAIPSVDGTNTETFIIVNFEKRLIIIGGTSYAGEIKKSIFTILNYLLPQHKNVLSMHCSANVGEKDDVAVFFGLSGTGKTTLSADPRRRLIGDDEHGWDNSGVFNFEGGCYAKIINLSPEAEPEIYQTTRRFGTILENVAIDTVSRRIDLNDDSFTENTRASYPITHIPNIVKSGMGGHPTNIIMLTCDAFGVLPPIARLTPDQAMYHFLSGYTAKVAGTEAGITEPQAAFSACFGAPFMALHPSVYAKLLGEKIARHGVSCWLVNTGWSGGPYGVGSRMKIAYSRALVNAAIDGTLNAGSFVKDQFFGLDIPTGCSGVPAEVLNPKNTWVDKTKYDETATMLVERFRKNFEQYRSYVSAGVAEVM.

Arg-60, Tyr-195, and Lys-201 together coordinate substrate. Residues Lys-201, His-221, and 237–245 contribute to the ATP site; that span reads GLSGTGKTT. Positions 201 and 221 each coordinate Mn(2+). Asp-258 is a Mn(2+) binding site. Residues Glu-286, Arg-324, and Ser-449 each contribute to the ATP site. Arg-324 is a substrate binding site.

It belongs to the phosphoenolpyruvate carboxykinase (ATP) family. The cofactor is Mn(2+).

It localises to the cytoplasm. The enzyme catalyses oxaloacetate + ATP = phosphoenolpyruvate + ADP + CO2. It participates in carbohydrate biosynthesis; gluconeogenesis. In terms of biological role, involved in the gluconeogenesis. Catalyzes the conversion of oxaloacetate (OAA) to phosphoenolpyruvate (PEP) through direct phosphoryl transfer between the nucleoside triphosphate and OAA. This is Phosphoenolpyruvate carboxykinase (ATP) from Geobacter metallireducens (strain ATCC 53774 / DSM 7210 / GS-15).